The primary structure comprises 60 residues: uncharacterized protein (60 aa).

A helical membrane pass occupies residues 33-55 (FRLLRGIFLITLVIWTVVWLKLL).

It belongs to the HHV-5 UL2 protein family.

The protein localises to the host membrane. This is an uncharacterized protein from Human cytomegalovirus (strain AD169) (HHV-5).